A 298-amino-acid polypeptide reads, in one-letter code: Fluorinase (298 aa).

Residues D14, 19-21 (DDS), Y75, S156, D209, N214, 268-269 (SR), and 276-278 (RNA) contribute to the S-adenosyl-L-methionine site.

Belongs to the SAM hydrolase / SAM-dependent halogenase family.

The enzyme catalyses fluoride + S-adenosyl-L-methionine = 5'-deoxy-5'-fluoroadenosine + L-methionine. Catalyzes the formation of a C-F bond by combining S-adenosyl-L-methionine (SAM) and fluoride to generate 5'-fluoro-5'-deoxyadenosine (5'-FDA) and L-methionine. The sequence is that of Fluorinase from Actinoplanes sp. (strain N902-109).